The primary structure comprises 324 residues: Phospho-N-acetylmuramoyl-pentapeptide-transferase (324 aa).

10 helical membrane passes run 5–25 (VILFTILMGFLISVLLSPILI), 50–70 (GTPTMGGVMIILSIIVTTIVM), 77–97 (ISPEMVLLLFVTLGYGLLGFL), 117–137 (LIGQIIIAVVFYAVYHYYNFA), 147–167 (LSFDLGWAYFILVLFMLVGGS), 176–196 (LDGLLSGTAAIAFGAFAILAW), 203–223 (VAIFSVAVVGAVLGFLVFNAH), 227–247 (VFMGDTGSLALGGAIVTIAIL), 250–270 (LEILLVIIGGVFVIETLSVIL), and 302–322 (VVVTFWAAGLLLAVLGIYIEV).

The protein belongs to the glycosyltransferase 4 family. MraY subfamily. Mg(2+) is required as a cofactor.

The protein resides in the cell membrane. It carries out the reaction UDP-N-acetyl-alpha-D-muramoyl-L-alanyl-gamma-D-glutamyl-meso-2,6-diaminopimeloyl-D-alanyl-D-alanine + di-trans,octa-cis-undecaprenyl phosphate = di-trans,octa-cis-undecaprenyl diphospho-N-acetyl-alpha-D-muramoyl-L-alanyl-D-glutamyl-meso-2,6-diaminopimeloyl-D-alanyl-D-alanine + UMP. It functions in the pathway cell wall biogenesis; peptidoglycan biosynthesis. In terms of biological role, catalyzes the initial step of the lipid cycle reactions in the biosynthesis of the cell wall peptidoglycan: transfers peptidoglycan precursor phospho-MurNAc-pentapeptide from UDP-MurNAc-pentapeptide onto the lipid carrier undecaprenyl phosphate, yielding undecaprenyl-pyrophosphoryl-MurNAc-pentapeptide, known as lipid I. This chain is Phospho-N-acetylmuramoyl-pentapeptide-transferase, found in Bacillus subtilis (strain 168).